The chain runs to 187 residues: Elongation factor P (187 aa).

The protein belongs to the elongation factor P family.

The protein resides in the cytoplasm. Its pathway is protein biosynthesis; polypeptide chain elongation. In terms of biological role, involved in peptide bond synthesis. Stimulates efficient translation and peptide-bond synthesis on native or reconstituted 70S ribosomes in vitro. Probably functions indirectly by altering the affinity of the ribosome for aminoacyl-tRNA, thus increasing their reactivity as acceptors for peptidyl transferase. The polypeptide is Elongation factor P (Parasynechococcus marenigrum (strain WH8102)).